A 90-amino-acid chain; its full sequence is UPF0237 protein NMB1653 (90 aa).

An ACT domain is found at 5 to 83; that stretch reads VITVIGKDRV…LDIRMQNEEI (79 aa).

Belongs to the UPF0237 family.

This chain is UPF0237 protein NMB1653, found in Neisseria meningitidis serogroup B (strain ATCC BAA-335 / MC58).